Reading from the N-terminus, the 334-residue chain is MYSKQWTRIILITSPFAIALSLLLSILYGAKHLSTDIVFTSLIHFDPGNTDHQIIWHSRIPRAAGALLIGAALAVSGALMQGITRNYLASPSIMGVSDGSAFIITLCMVLLPQSSSIEMMIYSFIGSALGAVLVFGLAAMMPNGFTPVQLAIIGTVTSMLLSSLSAAMSIYFQISQDLSFWYSARLHQMSPDFLKLAAPFFLIGIIMAISLSKKVTAVSLGDDISKSLGQKKKTIKIMAMLSVIILTGSAVALAGKIAFVGLVVPHITRFLVGSDYSRLIPCSCILGGIFLTLCDLASRFINYPFETPIEVVTSIIGVPFFLYLIKRKGGEQNG.

The next 9 membrane-spanning stretches (helical) occupy residues 9–29 (IILITSPFAIALSLLLSILYG), 63–83 (AAGALLIGAALAVSGALMQGI), 91–111 (PSIMGVSDGSAFIITLCMVLL), 119–139 (MMIYSFIGSALGAVLVFGLAA), 150–170 (LAIIGTVTSMLLSSLSAAMSI), 191–211 (PDFLKLAAPFFLIGIIMAISL), 243–263 (VIILTGSAVALAGKIAFVGLV), 281–301 (PCSCILGGIFLTLCDLASRFI), and 305–325 (FETPIEVVTSIIGVPFFLYLI).

The protein belongs to the binding-protein-dependent transport system permease family. FecCD subfamily. In terms of assembly, the complex is composed of one ATP-binding protein (YusV), two transmembrane proteins (FeuB and FeuC) and a solute-binding protein (FeuA).

It is found in the cell membrane. The protein localises to the membrane raft. Functionally, involved in the uptake of iron. Probably responsible for the translocation of the substrate across the membrane. In terms of biological role, part of the ABC transporter complex FeuABC/YusV involved in import of the catecholate siderophores bacillibactin and enterobactin. In Bacillus subtilis (strain 168), this protein is Iron-uptake system permease protein FeuB (feuB).